The following is a 260-amino-acid chain: Proteasome subunit alpha (260 aa).

This sequence belongs to the peptidase T1A family. The 20S proteasome core is composed of 14 alpha and 14 beta subunits that assemble into four stacked heptameric rings, resulting in a barrel-shaped structure. The two inner rings, each composed of seven catalytic beta subunits, are sandwiched by two outer rings, each composed of seven alpha subunits. The catalytic chamber with the active sites is on the inside of the barrel. Has a gated structure, the ends of the cylinder being occluded by the N-termini of the alpha-subunits. Is capped at one or both ends by the proteasome regulatory ATPase, PAN.

The protein resides in the cytoplasm. With respect to regulation, the formation of the proteasomal ATPase PAN-20S proteasome complex, via the docking of the C-termini of PAN into the intersubunit pockets in the alpha-rings, triggers opening of the gate for substrate entry. Interconversion between the open-gate and close-gate conformations leads to a dynamic regulation of the 20S proteasome proteolysis activity. Functionally, component of the proteasome core, a large protease complex with broad specificity involved in protein degradation. This is Proteasome subunit alpha from Thermococcus onnurineus (strain NA1).